A 336-amino-acid chain; its full sequence is 4-aminobenzoate N-oxygenase (336 aa).

Residue tyrosine 93 coordinates 4-nitrobenzoate. Positions 101, 136, 139, and 196 each coordinate Fe cation. Asparagine 200 provides a ligand contact to 4-nitrobenzoate. Residues histidine 223, glutamate 227, and histidine 230 each coordinate Fe cation.

This sequence belongs to the AurF N-oxygenase family. As to quaternary structure, homodimer. The cofactor is Fe(2+).

It catalyses the reaction 4-aminobenzoate + AH2 + 2 O2 = 4-nitrobenzoate + A + 2 H2O. It functions in the pathway antibiotic biosynthesis. Involved in the biosynthesis of the polyketide antibiotic aureothin. Catalyzes the oxidation of p-aminobenzoate (pABA) to p-nitrobenzoate (pNBA), an unusual polyketide synthase starter unit. Reaction mechanism involves the generation of a peroxodiiron(III/III) intermediate, which effects the initial oxidation of p-aminobenzoate to p-hydroxylaminobenzoate (Ar-NHOH). Ar-NHOH is then probably directly converted to the fully oxidized p-nitrobenzoate via a four-electron N-oxidation, bypassing the formation of a nitroso compound. In Streptomyces thioluteus, this protein is 4-aminobenzoate N-oxygenase.